The primary structure comprises 292 residues: NAD kinase (292 aa).

Catalysis depends on D73, which acts as the Proton acceptor. Residues 73-74, 147-148, H158, R175, D177, 188-193, and Q247 each bind NAD(+); these read DG, NE, and TAYSLS.

Belongs to the NAD kinase family. A divalent metal cation serves as cofactor.

It localises to the cytoplasm. It carries out the reaction NAD(+) + ATP = ADP + NADP(+) + H(+). Its function is as follows. Involved in the regulation of the intracellular balance of NAD and NADP, and is a key enzyme in the biosynthesis of NADP. Catalyzes specifically the phosphorylation on 2'-hydroxyl of the adenosine moiety of NAD to yield NADP. The sequence is that of NAD kinase from Escherichia coli (strain UTI89 / UPEC).